Consider the following 353-residue polypeptide: Photosystem II protein D1 (353 aa).

Thr-2 is subject to N-acetylthreonine. The residue at position 2 (Thr-2) is a Phosphothreonine. Transmembrane regions (helical) follow at residues 29–46 (YIGWFGVLMIPTLLTATS), 118–133 (HFLLGVACYMGREWEL), and 142–156 (WIAVAYSAPVAAATA). Residue His-118 coordinates chlorophyll a. Tyr-126 is a binding site for pheophytin a. Asp-170 and Glu-189 together coordinate [CaMn4O5] cluster. Residues 197-218 (FHMLGVAGVFGGSLFSAMHGSL) traverse the membrane as a helical segment. His-198 lines the chlorophyll a pocket. A quinone-binding positions include His-215 and 264–265 (SF). His-215 contacts Fe cation. His-272 contributes to the Fe cation binding site. Residues 274–288 (FLAAWPVVGIWFTAL) traverse the membrane as a helical segment. The [CaMn4O5] cluster site is built by His-332, Glu-333, Asp-342, and Ala-344. The propeptide occupies 345–353 (AVEAPSTNG).

This sequence belongs to the reaction center PufL/M/PsbA/D family. In terms of assembly, PSII is composed of 1 copy each of membrane proteins PsbA, PsbB, PsbC, PsbD, PsbE, PsbF, PsbH, PsbI, PsbJ, PsbK, PsbL, PsbM, PsbT, PsbX, PsbY, PsbZ, Psb30/Ycf12, at least 3 peripheral proteins of the oxygen-evolving complex and a large number of cofactors. It forms dimeric complexes. The D1/D2 heterodimer binds P680, chlorophylls that are the primary electron donor of PSII, and subsequent electron acceptors. It shares a non-heme iron and each subunit binds pheophytin, quinone, additional chlorophylls, carotenoids and lipids. D1 provides most of the ligands for the Mn4-Ca-O5 cluster of the oxygen-evolving complex (OEC). There is also a Cl(-1) ion associated with D1 and D2, which is required for oxygen evolution. The PSII complex binds additional chlorophylls, carotenoids and specific lipids. is required as a cofactor. Tyr-161 forms a radical intermediate that is referred to as redox-active TyrZ, YZ or Y-Z. In terms of processing, C-terminally processed by CTPA; processing is essential to allow assembly of the oxygen-evolving complex and thus photosynthetic growth.

It localises to the plastid. Its subcellular location is the chloroplast thylakoid membrane. The enzyme catalyses 2 a plastoquinone + 4 hnu + 2 H2O = 2 a plastoquinol + O2. Photosystem II (PSII) is a light-driven water:plastoquinone oxidoreductase that uses light energy to abstract electrons from H(2)O, generating O(2) and a proton gradient subsequently used for ATP formation. It consists of a core antenna complex that captures photons, and an electron transfer chain that converts photonic excitation into a charge separation. The D1/D2 (PsbA/PsbD) reaction center heterodimer binds P680, the primary electron donor of PSII as well as several subsequent electron acceptors. This is Photosystem II protein D1 from Drimys granadensis.